The sequence spans 587 residues: Glutathione hydrolase proenzyme (587 aa).

A signal peptide spans 1-28 (MKRTWNVCLTALLSVLLVAGSVPFHAEA). A propeptide spanning residues 29-35 (KKPPKSY) is cleaved from the precursor. An L-glutamate-binding site is contributed by Arg113. The active-site Nucleophile is the Thr403. Residues Thr421, Glu423, Glu442, Asp445, 464 to 465 (SS), and 485 to 486 (GG) contribute to the L-glutamate site.

This sequence belongs to the gamma-glutamyltransferase family. In terms of assembly, this enzyme consists of two polypeptide chains, which are synthesized in precursor form from a single polypeptide. In terms of processing, cleaved by autocatalysis into a large and small subunit.

It localises to the secreted. It carries out the reaction an N-terminal (5-L-glutamyl)-[peptide] + an alpha-amino acid = 5-L-glutamyl amino acid + an N-terminal L-alpha-aminoacyl-[peptide]. It catalyses the reaction glutathione + H2O = L-cysteinylglycine + L-glutamate. The catalysed reaction is an S-substituted glutathione + H2O = an S-substituted L-cysteinylglycine + L-glutamate. Its pathway is sulfur metabolism; glutathione metabolism. With respect to regulation, inhibited by glucose. Cleaves the gamma-glutamyl bond of extracellular glutathione (gamma-Glu-Cys-Gly), glutathione conjugates, and other gamma-glutamyl compounds. The metabolism of glutathione releases free glutamate and the dipeptide cysteinyl-glycine, which is hydrolyzed to cysteine and glycine by dipeptidases. Uses glutamine as a gamma-glutamyl donor and acceptor for gamma-polyglutamic acid synthesis. Dipeptides are better gamma-glutamyl acceptors than free amino acids. This is Glutathione hydrolase proenzyme (ggt) from Bacillus subtilis subsp. natto.